A 402-amino-acid polypeptide reads, in one-letter code: Deoxyguanosinetriphosphate triphosphohydrolase-like protein (402 aa).

The 145-residue stretch at 73 to 217 (RLTHTIEVAQ…AAIADDIAYN (145 aa)) folds into the HD domain.

The protein belongs to the dGTPase family. Type 2 subfamily.

In Brucella anthropi (strain ATCC 49188 / DSM 6882 / CCUG 24695 / JCM 21032 / LMG 3331 / NBRC 15819 / NCTC 12168 / Alc 37) (Ochrobactrum anthropi), this protein is Deoxyguanosinetriphosphate triphosphohydrolase-like protein.